The chain runs to 101 residues: uncharacterized protein (101 aa).

Positions M1–K12 are enriched in basic residues. 2 disordered regions span residues M1 to A30 and A65 to K87. Over residues A65–R78 the composition is skewed to low complexity.

This is an uncharacterized protein from Eremothecium gossypii (strain ATCC 10895 / CBS 109.51 / FGSC 9923 / NRRL Y-1056) (Yeast).